The chain runs to 109 residues: Hainantoxin-XVIII-4 (109 aa).

Positions 1 to 18 (MKLSIIIIATSLVIAVVA) are cleaved as a signal peptide. Positions 19-46 (FPSKDSKAIENDKTEQRMEIVVQETARA) are excised as a propeptide. 3 disulfide bridges follow: Cys55–Cys68, Cys59–Cys108, and Cys61–Cys81.

Belongs to the neurotoxin 25 family. F7 subfamily. Expressed by the venom gland.

It localises to the secreted. Putative ion channel inhibitor. The chain is Hainantoxin-XVIII-4 from Cyriopagopus hainanus (Chinese bird spider).